The following is a 325-amino-acid chain: Replication factor C small subunit (325 aa).

Position 52–59 (52–59 (GPAGVGKT)) interacts with ATP.

The protein belongs to the activator 1 small subunits family. RfcS subfamily. As to quaternary structure, heteromultimer composed of small subunits (RfcS) and large subunits (RfcL).

Part of the RFC clamp loader complex which loads the PCNA sliding clamp onto DNA. The chain is Replication factor C small subunit from Natronomonas pharaonis (strain ATCC 35678 / DSM 2160 / CIP 103997 / JCM 8858 / NBRC 14720 / NCIMB 2260 / Gabara) (Halobacterium pharaonis).